The sequence spans 113 residues: Integration host factor subunit alpha (113 aa).

Disordered regions lie at residues 59–80 (GNFQVRDKPPRPGRNPKTGETI) and 94–113 (QKLKSVVEQPNSPPDPASAE). Pro residues predominate over residues 104–113 (NSPPDPASAE).

This sequence belongs to the bacterial histone-like protein family. In terms of assembly, heterodimer of an alpha and a beta chain.

Its function is as follows. This protein is one of the two subunits of integration host factor, a specific DNA-binding protein that functions in genetic recombination as well as in transcriptional and translational control. The protein is Integration host factor subunit alpha of Bordetella pertussis (strain Tohama I / ATCC BAA-589 / NCTC 13251).